The following is a 50-amino-acid chain: Large ribosomal subunit protein eL40 (50 aa).

It belongs to the eukaryotic ribosomal protein eL40 family.

In Aeropyrum pernix (strain ATCC 700893 / DSM 11879 / JCM 9820 / NBRC 100138 / K1), this protein is Large ribosomal subunit protein eL40.